The chain runs to 94 residues: Citrate lyase acyl carrier protein (94 aa).

At serine 14 the chain carries O-(phosphoribosyl dephospho-coenzyme A)serine.

Belongs to the CitD family. As to quaternary structure, oligomer with a subunit composition of (alpha,beta,gamma)6.

Its subcellular location is the cytoplasm. In terms of biological role, covalent carrier of the coenzyme of citrate lyase. This is Citrate lyase acyl carrier protein from Fusobacterium nucleatum subsp. nucleatum (strain ATCC 25586 / DSM 15643 / BCRC 10681 / CIP 101130 / JCM 8532 / KCTC 2640 / LMG 13131 / VPI 4355).